We begin with the raw amino-acid sequence, 245 residues long: Carboxymethylenebutenolidase homolog (245 aa).

Ala-2 carries the N-acetylalanine modification. Residue Lys-36 is modified to N6-acetyllysine. Catalysis depends on residues Cys-132, Asp-179, and His-212. The residue at position 223 (Ser-223) is a Phosphoserine.

It belongs to the dienelactone hydrolase family. In terms of tissue distribution, widely expressed, with highest levels in liver, followed by kidney, small intestine and colon. Present in liver and intestine (at protein level).

It localises to the cytoplasm. The protein resides in the cytosol. Strongly inhibited by p-chloromercuribenzoate (PCMB). Partially inhibited by bis-p-nitrophenylphosphate (BNPP). Not inhibited by DFP, PMSF, eserine or EDTA. Functionally, cysteine hydrolase. Can convert the prodrug olmesartan medoxomil into its pharmacologically active metabolite olmerstatan, an angiotensin receptor blocker, in liver and intestine. May also activate beta-lactam antibiotics faropenem medoxomil and lenampicillin. The sequence is that of Carboxymethylenebutenolidase homolog (CMBL) from Homo sapiens (Human).